The sequence spans 185 residues: Large ribosomal subunit protein uL5 (185 aa).

This sequence belongs to the universal ribosomal protein uL5 family. In terms of assembly, part of the 50S ribosomal subunit; part of the 5S rRNA/L5/L18/L25 subcomplex. Contacts the 5S rRNA and the P site tRNA. Forms a bridge to the 30S subunit in the 70S ribosome.

This is one of the proteins that bind and probably mediate the attachment of the 5S RNA into the large ribosomal subunit, where it forms part of the central protuberance. In the 70S ribosome it contacts protein S13 of the 30S subunit (bridge B1b), connecting the 2 subunits; this bridge is implicated in subunit movement. Contacts the P site tRNA; the 5S rRNA and some of its associated proteins might help stabilize positioning of ribosome-bound tRNAs. The sequence is that of Large ribosomal subunit protein uL5 from Bacteroides fragilis (strain ATCC 25285 / DSM 2151 / CCUG 4856 / JCM 11019 / LMG 10263 / NCTC 9343 / Onslow / VPI 2553 / EN-2).